A 296-amino-acid chain; its full sequence is Non-selective voltage-gated ion channel VDAC2 (296 aa).

Lysine 25 lines the ATP pocket. A Glycyl lysine isopeptide (Lys-Gly) (interchain with G-Cter in ubiquitin) cross-link involves residue lysine 25. Serine 26 carries the phosphoserine modification. An ATP-binding site is contributed by lysine 33. N6-acetyllysine; alternate is present on lysine 33. The residue at position 33 (lysine 33) is an N6-succinyllysine; alternate. Lysine 33 participates in a covalent cross-link: Glycyl lysine isopeptide (Lys-Gly) (interchain with G-Cter in ubiquitin); alternate. The next 2 beta stranded transmembrane spans lie at 39–48 (LVKLDVKTKS) and 52–60 (VEFTTSGSS). Residues lysine 66 and lysine 74 each participate in a glycyl lysine isopeptide (Lys-Gly) (interchain with G-Cter in ubiquitin) cross-link. A beta stranded transmembrane segment spans residues 67–77 (VNGSLETKYKW). Tyrosine 80 carries the post-translational modification Phosphotyrosine. A run of 3 beta stranded transmembrane segments spans residues 82–89 (LTFTEKWN), 93–102 (TLGTEIAIED), and 108–117 (LKLTFDTTFS). Threonine 120 is modified (phosphothreonine). Position 122 is an N6-acetyllysine; alternate (lysine 122). Residue lysine 122 forms a Glycyl lysine isopeptide (Lys-Gly) (interchain with G-Cter in ubiquitin); alternate linkage. Residue lysine 123 forms a Glycyl lysine isopeptide (Lys-Gly) (interchain with G-Cter in ubiquitin) linkage. 4 consecutive transmembrane segments (beta stranded) span residues 124 to 133 (SGKIKSAYKR), 136 to 143 (LNLGCDVD), 150 to 158 (AIHGSAVFG), and 163 to 171 (LAGYQMTFD). Lysine 174 is covalently cross-linked (Glycyl lysine isopeptide (Lys-Gly) (interchain with G-Cter in ubiquitin)). 6 consecutive transmembrane segments (beta stranded) span residues 176–188 (KLTR…GYKT), 191–198 (FQLHTNVN), 202–211 (EFGGSIYQKV), 215–224 (LETAVNLAWT), 231–240 (RFGIAAKYKL), and 244–251 (ASISAKVN). At serine 206 the chain carries Phosphoserine. Serine 253 bears the Phosphoserine mark. NAD(+) is bound by residues 255–257 (LVG) and 273–277 (SALID). 2 beta stranded membrane passes run 255 to 264 (LVGVGYTQTL) and 267 to 276 (GVKLTLSALI). Lysine 279 is modified (N6-acetyllysine; alternate). Residue lysine 279 forms a Glycyl lysine isopeptide (Lys-Gly) (interchain with G-Cter in ubiquitin); alternate linkage. The beta stranded transmembrane segment at 286-295 (HKLGLGLELE) threads the bilayer. Lysine 287 participates in a covalent cross-link: Glycyl lysine isopeptide (Lys-Gly) (interchain with G-Cter in ubiquitin).

The protein belongs to the eukaryotic mitochondrial porin family. In terms of assembly, monomer, homodimer and higher order oligomers; formation of higher order structures is necessary for scramblase activity. Post-translationally, ubiquitinated by PRKN during mitophagy, leading to its degradation and enhancement of mitophagy. Deubiquitinated by USP30.

The protein resides in the mitochondrion outer membrane. It is found in the membrane. The catalysed reaction is chloride(in) = chloride(out). It carries out the reaction K(+)(in) = K(+)(out). It catalyses the reaction a 1,2-diacyl-sn-glycero-3-phospho-L-serine(in) = a 1,2-diacyl-sn-glycero-3-phospho-L-serine(out). The enzyme catalyses a 1,2-diacyl-sn-glycero-3-phosphocholine(in) = a 1,2-diacyl-sn-glycero-3-phosphocholine(out). The catalysed reaction is a 1,2-diacyl-sn-glycero-3-phospho-(1D-myo-inositol)(in) = a 1,2-diacyl-sn-glycero-3-phospho-(1D-myo-inositol)(out). In terms of biological role, non-selective voltage-gated ion channel that mediates the transport of anions and cations through the mitochondrion outer membrane and plasma membrane. The channel adopts an open conformation at zero mV and a closed conformation at both positive and negative potentials. There are two populations of channels; the main that functions in a lower open-state conductance with lower ion selectivity, that switch, in a voltage-dependent manner, from the open to a low-conducting 'closed' state and the other that has a normal ion selectivity in the typical high conductance, 'open' state. Binds various lipids, including the sphingolipid ceramide, the phospholipid phosphatidylcholine, and the sterols cholesterol and oxysterol. Binding of ceramide promotes the mitochondrial outer membrane permeabilization (MOMP) apoptotic pathway. Its function is as follows. Catalyzes the scrambling of phospholipids across the outer mitochondrial membrane; the mechanism is unrelated to channel activity and is capable of translocating both anionic and zwitterionic phospholipids. This chain is Non-selective voltage-gated ion channel VDAC2, found in Meleagris gallopavo (Wild turkey).